The chain runs to 61 residues: Large ribosomal subunit protein bL32 (61 aa).

This sequence belongs to the bacterial ribosomal protein bL32 family.

In Phytoplasma mali (strain AT), this protein is Large ribosomal subunit protein bL32.